Reading from the N-terminus, the 433-residue chain is tRNA(Ile)-lysidine synthase (433 aa).

37 to 42 contacts ATP; sequence SGGKDS.

The protein belongs to the tRNA(Ile)-lysidine synthase family.

It localises to the cytoplasm. The catalysed reaction is cytidine(34) in tRNA(Ile2) + L-lysine + ATP = lysidine(34) in tRNA(Ile2) + AMP + diphosphate + H(+). Functionally, ligates lysine onto the cytidine present at position 34 of the AUA codon-specific tRNA(Ile) that contains the anticodon CAU, in an ATP-dependent manner. Cytidine is converted to lysidine, thus changing the amino acid specificity of the tRNA from methionine to isoleucine. This Leptospira interrogans serogroup Icterohaemorrhagiae serovar Lai (strain 56601) protein is tRNA(Ile)-lysidine synthase.